The following is a 918-amino-acid chain: Serine/threonine-protein kinase D1 (918 aa).

A Phosphotyrosine modification is found at Tyr93. The Phorbol-ester/DAG-type 1 zinc finger occupies 144 to 194; the sequence is PHALFVHSYRAPAFCDHCGEMLWGLVRQGLKCEGCGLNYHKRCAFKIPNNC. 4 positions are modified to phosphoserine: Ser203, Ser206, Ser217, and Ser221. The Phorbol-ester/DAG-type 2 zinc finger occupies 276–326; sequence PHTFVIHSYTRPTVCQFCKKLLKGLFRQGLQCKDCRFNCHKRCAPKVPNNC. 2 disordered regions span residues 338-362 and 379-410; these read SPGA…NSGL and AEGQ…SNNI. Over residues 345–355 the composition is skewed to acidic residues; sequence VVMEEGSDDND. The residue at position 351 (Ser351) is a Phosphoserine. Residues 400 to 410 show a composition bias toward polar residues; it reads RTISPSTSNNI. Phosphoserine; by MAPK13 occurs at positions 403 and 407. One can recognise a PH domain in the interval 428–547; it reads TVMKEGWMVH…WEVAIQHALM (120 aa). The residue at position 438 (Tyr438) is a Phosphotyrosine. Ser454 is modified (phosphoserine). At Tyr469 the chain carries Phosphotyrosine; by ABL. Phosphotyrosine is present on Tyr508. Ser554 is subject to Phosphoserine. In terms of domain architecture, Protein kinase spans 589–845; it reads IFPDEVLGSG…VDKTLSHPWL (257 aa). ATP-binding positions include 595 to 603 and Lys618; that span reads LGSGQFGIV. Asp712 functions as the Proton acceptor in the catalytic mechanism. The residue at position 744 (Ser744) is a Phosphoserine; by PKC/PRKCD. Ser748 is modified (phosphoserine; by autocatalysis and PKC/PRKCD). Tyr755 is modified (phosphotyrosine). At Ser916 the chain carries Phosphoserine; by autocatalysis.

Belongs to the protein kinase superfamily. CAMK Ser/Thr protein kinase family. PKD subfamily. Interacts (via N-terminus) with ADAP1/CENTA1. Interacts with MAPK13. Interacts with DAPK1 in an oxidative stress-regulated manner. Interacts with USP28; the interaction induces phosphorylation of USP28 and activated KRAS-mediated stabilization of ZNF304. Interacts with AKAP13 (via C-terminal domain). It depends on Mg(2+) as a cofactor. Phosphorylated at Ser-403 and Ser-407 by MAPK13 during regulation of insulin secretion in pancreatic beta cells. Phosphorylated by DAPK1. Phosphorylated at Tyr-93 and by ABL at Tyr-469, which primes the kinase in response to oxidative stress, and promotes a second step activating phosphorylation at Ser-744/Ser-748 by PKRD. Phosphorylated at Ser-916 upon S.enterica infection in macrophages.

It localises to the cytoplasm. Its subcellular location is the cell membrane. The protein localises to the golgi apparatus. It is found in the trans-Golgi network. The enzyme catalyses L-seryl-[protein] + ATP = O-phospho-L-seryl-[protein] + ADP + H(+). The catalysed reaction is L-threonyl-[protein] + ATP = O-phospho-L-threonyl-[protein] + ADP + H(+). With respect to regulation, activated by DAG and phorbol esters. Phorbol-ester/DAG-type domain 1 binds DAG with high affinity and appears to play the dominant role in mediating translocation to the cell membrane and trans-Golgi network. Phorbol-ester/DAG-type domain 2 binds phorbol ester with higher affinity. Autophosphorylation of Ser-748 and phosphorylation of Ser-744 by PKC relieves auto-inhibition by the PH domain. Phosphorylation on Tyr-469 by the SRC-ABL1 pathway in response to oxidative stress, is also required for activation. Activated by DAPK1 under oxidative stress. In terms of biological role, serine/threonine-protein kinase that converts transient diacylglycerol (DAG) signals into prolonged physiological effects downstream of PKC, and is involved in the regulation of MAPK8/JNK1 and Ras signaling, Golgi membrane integrity and trafficking, cell survival through NF-kappa-B activation, cell migration, cell differentiation by mediating HDAC7 nuclear export, cell proliferation via MAPK1/3 (ERK1/2) signaling, and plays a role in cardiac hypertrophy, VEGFA-induced angiogenesis, genotoxic-induced apoptosis and flagellin-stimulated inflammatory response. Phosphorylates the epidermal growth factor receptor (EGFR) on dual threonine residues, which leads to the suppression of epidermal growth factor (EGF)-induced MAPK8/JNK1 activation and subsequent JUN phosphorylation. Phosphorylates RIN1, inducing RIN1 binding to 14-3-3 proteins YWHAB, YWHAE and YWHAZ and increased competition with RAF1 for binding to GTP-bound form of Ras proteins (NRAS, HRAS and KRAS). Acts downstream of the heterotrimeric G-protein beta/gamma-subunit complex to maintain the structural integrity of the Golgi membranes, and is required for protein transport along the secretory pathway. In the trans-Golgi network (TGN), regulates the fission of transport vesicles that are on their way to the plasma membrane. May act by activating the lipid kinase phosphatidylinositol 4-kinase beta (PI4KB) at the TGN for the local synthesis of phosphorylated inositol lipids, which induces a sequential production of DAG, phosphatidic acid (PA) and lyso-PA (LPA) that are necessary for membrane fission and generation of specific transport carriers to the cell surface. Under oxidative stress, is phosphorylated at Tyr-469 via SRC-ABL1 and contributes to cell survival by activating IKK complex and subsequent nuclear translocation and activation of NFKB1. Involved in cell migration by regulating integrin alpha-5/beta-3 recycling and promoting its recruitment in newly forming focal adhesion. In osteoblast differentiation, mediates the bone morphogenetic protein 2 (BMP2)-induced nuclear export of HDAC7, which results in the inhibition of HDAC7 transcriptional repression of RUNX2. In neurons, plays an important role in neuronal polarity by regulating the biogenesis of TGN-derived dendritic vesicles, and is involved in the maintenance of dendritic arborization and Golgi structure in hippocampal cells. May potentiate mitogenesis induced by the neuropeptide bombesin or vasopressin by mediating an increase in the duration of MAPK1/3 (ERK1/2) signaling, which leads to accumulation of immediate-early gene products including FOS that stimulate cell cycle progression. Plays an important role in the proliferative response induced by low calcium in keratinocytes, through sustained activation of MAPK1/3 (ERK1/2) pathway. Downstream of novel PKC signaling, plays a role in cardiac hypertrophy by phosphorylating HDAC5, which in turn triggers XPO1/CRM1-dependent nuclear export of HDAC5, MEF2A transcriptional activation and induction of downstream target genes that promote myocyte hypertrophy and pathological cardiac remodeling. Mediates cardiac troponin I (TNNI3) phosphorylation at the PKA sites, which results in reduced myofilament calcium sensitivity, and accelerated crossbridge cycling kinetics. The PRKD1-HDAC5 pathway is also involved in angiogenesis by mediating VEGFA-induced specific subset of gene expression, cell migration, and tube formation. In response to VEGFA, is necessary and required for HDAC7 phosphorylation which induces HDAC7 nuclear export and endothelial cell proliferation and migration. During apoptosis induced by cytarabine and other genotoxic agents, PRKD1 is cleaved by caspase-3 at Asp-378, resulting in activation of its kinase function and increased sensitivity of cells to the cytotoxic effects of genotoxic agents. In epithelial cells, is required for transducing flagellin-stimulated inflammatory responses by binding and phosphorylating TLR5, which contributes to MAPK14/p38 activation and production of inflammatory cytokines. Acts as an activator of NLRP3 inflammasome assembly by mediating phosphorylation of NLRP3. May play a role in inflammatory response by mediating activation of NF-kappa-B. May be involved in pain transmission by directly modulating TRPV1 receptor. Plays a role in activated KRAS-mediated stabilization of ZNF304 in colorectal cancer (CRC) cells. Regulates nuclear translocation of transcription factor TFEB in macrophages upon live S.enterica infection. The chain is Serine/threonine-protein kinase D1 (Prkd1) from Mus musculus (Mouse).